The following is a 110-amino-acid chain: Large ribosomal subunit protein uL24 (110 aa).

The protein belongs to the universal ribosomal protein uL24 family. As to quaternary structure, part of the 50S ribosomal subunit.

Its function is as follows. One of two assembly initiator proteins, it binds directly to the 5'-end of the 23S rRNA, where it nucleates assembly of the 50S subunit. In terms of biological role, one of the proteins that surrounds the polypeptide exit tunnel on the outside of the subunit. In Chloroflexus aurantiacus (strain ATCC 29366 / DSM 635 / J-10-fl), this protein is Large ribosomal subunit protein uL24.